A 328-amino-acid polypeptide reads, in one-letter code: Coiled-coil domain-containing protein 54 (328 aa).

Positions 93–148 form a coiled coil; that stretch reads KIQEKTDFFQKQMQVLETKMNVNENKQCATAEDIFSVKEDVDALKKKVTELGNQNS. At Thr182 the chain carries Phosphothreonine.

The polypeptide is Coiled-coil domain-containing protein 54 (CCDC54) (Bos taurus (Bovine)).